The chain runs to 126 residues: Large ribosomal subunit protein eL14 (126 aa).

This sequence belongs to the eukaryotic ribosomal protein eL14 family.

The protein is Large ribosomal subunit protein eL14 (RPL14) of Tetrahymena thermophila (strain SB210).